The following is a 561-amino-acid chain: Formate--tetrahydrofolate ligase (561 aa).

Residue 70-77 (TPAGEGKT) participates in ATP binding.

It belongs to the formate--tetrahydrofolate ligase family.

The enzyme catalyses (6S)-5,6,7,8-tetrahydrofolate + formate + ATP = (6R)-10-formyltetrahydrofolate + ADP + phosphate. The protein operates within one-carbon metabolism; tetrahydrofolate interconversion. In Pelagibacter ubique (strain HTCC1062), this protein is Formate--tetrahydrofolate ligase.